Here is a 53-residue protein sequence, read N- to C-terminus: UPF0391 membrane protein TM1040_2720 (53 aa).

2 helical membrane passes run 4–24 (WALAFLVIALIAAVFGFGGIA) and 29–48 (GIAQILFFIFLVMFVVALIL).

The protein belongs to the UPF0391 family.

It localises to the cell membrane. The protein is UPF0391 membrane protein TM1040_2720 of Ruegeria sp. (strain TM1040) (Silicibacter sp.).